Consider the following 181-residue polypeptide: Urease accessory protein UreE (181 aa).

The interval 143 to 181 (FDPEPGAYNQAGQGHSHGHSHGHSHNHDHEHSHGHKHAH) is disordered.

This sequence belongs to the UreE family.

Its subcellular location is the cytoplasm. Involved in urease metallocenter assembly. Binds nickel. Probably functions as a nickel donor during metallocenter assembly. This chain is Urease accessory protein UreE, found in Marinobacter nauticus (strain ATCC 700491 / DSM 11845 / VT8) (Marinobacter aquaeolei).